The primary structure comprises 394 residues: Elongation factor Tu (394 aa).

A tr-type G domain is found at 10-204; that stretch reads KPHVNIGTIG…AVDSYIPQPV (195 aa). The segment at 19–26 is G1; it reads GHVDHGKT. 19–26 serves as a coordination point for GTP; it reads GHVDHGKT. Threonine 26 contacts Mg(2+). A G2 region spans residues 60–64; the sequence is GITIS. Residues 81 to 84 are G3; sequence DCPG. GTP-binding positions include 81-85 and 136-139; these read DCPGH and NKVD. The G4 stretch occupies residues 136–139; that stretch reads NKVD. The segment at 174 to 176 is G5; it reads SAL.

This sequence belongs to the TRAFAC class translation factor GTPase superfamily. Classic translation factor GTPase family. EF-Tu/EF-1A subfamily. In terms of assembly, monomer.

It localises to the cytoplasm. It carries out the reaction GTP + H2O = GDP + phosphate + H(+). Functionally, GTP hydrolase that promotes the GTP-dependent binding of aminoacyl-tRNA to the A-site of ribosomes during protein biosynthesis. This chain is Elongation factor Tu, found in Rickettsia massiliae (strain Mtu5).